The primary structure comprises 192 residues: Thymidine kinase (192 aa).

Residues 9-16 (SAMNAGKS) and 87-90 (DECQ) each bind ATP. E88 acts as the Proton acceptor in catalysis. Zn(2+) is bound by residues C145, C147, C182, and H185.

It belongs to the thymidine kinase family. In terms of assembly, homotetramer.

It is found in the cytoplasm. The enzyme catalyses thymidine + ATP = dTMP + ADP + H(+). In Vibrio vulnificus (strain CMCP6), this protein is Thymidine kinase.